Reading from the N-terminus, the 323-residue chain is tRNA U34 carboxymethyltransferase (323 aa).

Residues Lys-91, Trp-105, Lys-110, Gly-130, 152–154 (DPT), 181–182 (IE), Met-196, Tyr-200, and Arg-315 contribute to the carboxy-S-adenosyl-L-methionine site.

Belongs to the class I-like SAM-binding methyltransferase superfamily. CmoB family. Homotetramer.

The enzyme catalyses carboxy-S-adenosyl-L-methionine + 5-hydroxyuridine(34) in tRNA = 5-carboxymethoxyuridine(34) in tRNA + S-adenosyl-L-homocysteine + H(+). Catalyzes carboxymethyl transfer from carboxy-S-adenosyl-L-methionine (Cx-SAM) to 5-hydroxyuridine (ho5U) to form 5-carboxymethoxyuridine (cmo5U) at position 34 in tRNAs. The polypeptide is tRNA U34 carboxymethyltransferase (Escherichia coli (strain SE11)).